The following is a 158-amino-acid chain: Small ribosomal subunit protein uS7 (158 aa).

The protein belongs to the universal ribosomal protein uS7 family. Part of the 30S ribosomal subunit. Contacts proteins S9 and S11.

Its function is as follows. One of the primary rRNA binding proteins, it binds directly to 16S rRNA where it nucleates assembly of the head domain of the 30S subunit. Is located at the subunit interface close to the decoding center, probably blocks exit of the E-site tRNA. This is Small ribosomal subunit protein uS7 from Acidiphilium cryptum (strain JF-5).